We begin with the raw amino-acid sequence, 352 residues long: Protein RecA (352 aa).

Residue 66 to 73 participates in ATP binding; that stretch reads GPESSGKT. The interval 330–352 is disordered; the sequence is TKDDSKVATVDKANEEQAAEPVQ.

The protein belongs to the RecA family.

It is found in the cytoplasm. Functionally, can catalyze the hydrolysis of ATP in the presence of single-stranded DNA, the ATP-dependent uptake of single-stranded DNA by duplex DNA, and the ATP-dependent hybridization of homologous single-stranded DNAs. It interacts with LexA causing its activation and leading to its autocatalytic cleavage. In Psychrobacter cryohalolentis (strain ATCC BAA-1226 / DSM 17306 / VKM B-2378 / K5), this protein is Protein RecA.